We begin with the raw amino-acid sequence, 458 residues long: UDP-N-acetylglucosamine 1-carboxyvinyltransferase (458 aa).

Phosphoenolpyruvate is bound at residue 34–35 (KN). Residue Arg-104 participates in UDP-N-acetyl-alpha-D-glucosamine binding. Catalysis depends on Cys-128, which acts as the Proton donor. Cys-128 is modified (2-(S-cysteinyl)pyruvic acid O-phosphothioketal). 2 residues coordinate UDP-N-acetyl-alpha-D-glucosamine: Asp-320 and Val-342.

Belongs to the EPSP synthase family. MurA subfamily.

The protein resides in the cytoplasm. The enzyme catalyses phosphoenolpyruvate + UDP-N-acetyl-alpha-D-glucosamine = UDP-N-acetyl-3-O-(1-carboxyvinyl)-alpha-D-glucosamine + phosphate. Its pathway is cell wall biogenesis; peptidoglycan biosynthesis. Its function is as follows. Cell wall formation. Adds enolpyruvyl to UDP-N-acetylglucosamine. The protein is UDP-N-acetylglucosamine 1-carboxyvinyltransferase of Prochlorococcus marinus (strain NATL1A).